We begin with the raw amino-acid sequence, 284 residues long: MDAIKKKMQAMKLEKDNAMDRADTLEQQNKEANNRAEKSEEEVHNLQKRMQQLENDLDQVQESLLKANIQLVEKDKALSNAEGEVAALNRRIQLLEEDLERSEERLNTATTKLAEASQAADESERMRKVLENRSLSDEERMDALENQLKEARFLAEEADRKYDEVARKLAMVEADLERAEERAETGESKIVELEEELRVVGNNLKSLEVSEEKANQREEAYKEQIKTLTNKLKAAEARAEFAERSVQKLQKEVDRLEDELVNEKEKYKSITDELDQTFSELSGY.

Residues 1-51 (MDAIKKKMQAMKLEKDNAMDRADTLEQQNKEANNRAEKSEEEVHNLQKRMQ) form a disordered region. Positions 1–273 (MDAIKKKMQA…KEKYKSITDE (273 aa)) form a coiled coil. Residues 12–45 (KLEKDNAMDRADTLEQQNKEANNRAEKSEEEVHN) show a composition bias toward basic and acidic residues. IgE-binding regions lie at residues 43 to 57 (VHNL…ENDL), 85 to 105 (VAAL…SEER), 133 to 153 (RSLS…EARF), 187 to 202 (ESKI…VVGN), 247 to 284 (QKLQ…LSGY), 249 to 260 (LQKEVDRLEDEL), and 266 to 281 (KYKS…FSEL).

The protein belongs to the tropomyosin family. Homodimer.

In terms of biological role, tropomyosin, in association with the troponin complex, plays a central role in the calcium dependent regulation of muscle contraction. This Penaeus aztecus (Brown shrimp) protein is Tropomyosin Pen a 1.0102.